The primary structure comprises 387 residues: 3-ketoacyl-CoA thiolase (387 aa).

The Acyl-thioester intermediate role is filled by Cys91. Active-site proton acceptor residues include His343 and Cys373.

It belongs to the thiolase-like superfamily. Thiolase family. Heterotetramer of two alpha chains (FadB) and two beta chains (FadA).

It localises to the cytoplasm. The catalysed reaction is an acyl-CoA + acetyl-CoA = a 3-oxoacyl-CoA + CoA. The protein operates within lipid metabolism; fatty acid beta-oxidation. Its function is as follows. Catalyzes the final step of fatty acid oxidation in which acetyl-CoA is released and the CoA ester of a fatty acid two carbons shorter is formed. The protein is 3-ketoacyl-CoA thiolase of Shigella boydii serotype 4 (strain Sb227).